A 296-amino-acid polypeptide reads, in one-letter code: Acetylglutamate kinase (296 aa).

Residues 68-69, Arg90, and Asn193 each bind substrate; that span reads GG.

This sequence belongs to the acetylglutamate kinase family. ArgB subfamily.

The protein localises to the cytoplasm. The enzyme catalyses N-acetyl-L-glutamate + ATP = N-acetyl-L-glutamyl 5-phosphate + ADP. The protein operates within amino-acid biosynthesis; L-arginine biosynthesis; N(2)-acetyl-L-ornithine from L-glutamate: step 2/4. In terms of biological role, catalyzes the ATP-dependent phosphorylation of N-acetyl-L-glutamate. This Acidothermus cellulolyticus (strain ATCC 43068 / DSM 8971 / 11B) protein is Acetylglutamate kinase.